A 104-amino-acid chain; its full sequence is Small ribosomal subunit protein bS16 (104 aa).

It belongs to the bacterial ribosomal protein bS16 family.

The chain is Small ribosomal subunit protein bS16 from Gemmatimonas aurantiaca (strain DSM 14586 / JCM 11422 / NBRC 100505 / T-27).